Here is a 134-residue protein sequence, read N- to C-terminus: Protein NrdI (134 aa).

Belongs to the NrdI family.

Its function is as follows. Probably involved in ribonucleotide reductase function. The chain is Protein NrdI from Yersinia enterocolitica serotype O:8 / biotype 1B (strain NCTC 13174 / 8081).